A 106-amino-acid chain; its full sequence is Ig kappa-b4 chain C region (106 aa).

One can recognise an Ig-like domain in the interval 6–99 (PSVLLFPPSK…VQGSASPIVQ (94 aa)). A disulfide bridge links Cys-27 with Cys-87. Polar residues predominate over residues 48 to 64 (QQSGIENSKTPQSPEDN). Positions 48 to 67 (QQSGIENSKTPQSPEDNTYS) are disordered.

The polypeptide is Ig kappa-b4 chain C region (K-BAS) (Oryctolagus cuniculus (Rabbit)).